A 150-amino-acid chain; its full sequence is Transthyretin (150 aa).

The N-terminal stretch at 1-20 (MAFHSTLLVFLAGLVFLSEA) is a signal peptide. Cys-33 is subject to Sulfocysteine. The L-thyroxine site is built by Lys-38, Glu-77, and Ser-140.

This sequence belongs to the transthyretin family. Homotetramer. Dimer of dimers. In the homotetramer, subunits assemble around a central channel that can accommodate two ligand molecules. In terms of processing, sulfonation of the reactive cysteine Cys-33 enhances the stability of the native conformation of TTR, avoiding misassembly of the protein leading to amyloid formation. Detected in serum (at protein level). Detected in liver and choroid plexus.

It localises to the secreted. Thyroid hormone-binding protein. Probably transports thyroxine from the bloodstream to the brain. This chain is Transthyretin (TTR), found in Gallus gallus (Chicken).